The primary structure comprises 55 residues: GRPSARYDAPYCSQEEVRECDDDCSGNPVRDACQCAYDPAGSPACDCYCVEPWRR.

Positions 1–5 (GRPSA) are excised as a propeptide.

Post-translationally, contains 4 disulfide bonds. Expressed by the venom duct.

The protein localises to the secreted. In terms of biological role, probable neurotoxin with unknown target. Possibly targets ion channels. The sequence is that of Conotoxin Cal22b from Californiconus californicus (California cone).